The chain runs to 62 residues: Large ribosomal subunit protein bL35 (62 aa).

Residues 1–26 (MPKMKTKSGLKKRIKITATGKVKRGN) are compositionally biased toward basic residues. Residues 1 to 62 (MPKMKTKSGL…SDFKRYKELI (62 aa)) are disordered. Positions 53-62 (SDFKRYKELI) are enriched in basic and acidic residues.

Belongs to the bacterial ribosomal protein bL35 family.

The chain is Large ribosomal subunit protein bL35 from Metamycoplasma arthritidis (strain 158L3-1) (Mycoplasma arthritidis).